A 429-amino-acid polypeptide reads, in one-letter code: Adenylosuccinate synthetase (429 aa).

Residues 12 to 18 and 40 to 42 each bind GTP; these read GDEGKGK and GHT. Aspartate 13 serves as the catalytic Proton acceptor. Aspartate 13 and glycine 40 together coordinate Mg(2+). IMP is bound by residues 13-16, 38-41, threonine 128, arginine 142, glutamine 223, threonine 238, and arginine 302; these read DEGK and NAGH. The active-site Proton donor is the histidine 41. 298–304 is a binding site for substrate; it reads TVTGRPR. Residues arginine 304, 330–332, and 412–414 contribute to the GTP site; these read LLD and SVG.

It belongs to the adenylosuccinate synthetase family. In terms of assembly, homodimer. Requires Mg(2+) as cofactor.

Its subcellular location is the cytoplasm. The catalysed reaction is IMP + L-aspartate + GTP = N(6)-(1,2-dicarboxyethyl)-AMP + GDP + phosphate + 2 H(+). The protein operates within purine metabolism; AMP biosynthesis via de novo pathway; AMP from IMP: step 1/2. Plays an important role in the de novo pathway of purine nucleotide biosynthesis. Catalyzes the first committed step in the biosynthesis of AMP from IMP. The chain is Adenylosuccinate synthetase from Lactobacillus gasseri (strain ATCC 33323 / DSM 20243 / BCRC 14619 / CIP 102991 / JCM 1131 / KCTC 3163 / NCIMB 11718 / NCTC 13722 / AM63).